The primary structure comprises 432 residues: GRAM domain-containing protein 2B (432 aa).

Position 1 is an N-acetylmethionine (Met-1). 2 disordered regions span residues 1-61 (MTEL…SPDQ) and 74-106 (DGAS…SSQY). Composition is skewed to basic and acidic residues over residues 9 to 39 (EDTK…EEKK) and 81 to 99 (DKND…ERKK). In terms of domain architecture, GRAM spans 110–177 (MHFHKLFLSV…FSVTLIKKTK (68 aa)). Residues 220 to 233 (TSVGNSPNPSSAEN) are compositionally biased toward polar residues. The interval 220–239 (TSVGNSPNPSSAENSFRADR) is disordered. Phosphoserine occurs at positions 225, 242, and 252. Positions 262 to 285 (RQDMEGYSSSGSQTPESENSRDFH) are disordered. Over residues 268–278 (YSSSGSQTPES) the composition is skewed to polar residues.

The sequence is that of GRAM domain-containing protein 2B (GRAMD2B) from Homo sapiens (Human).